We begin with the raw amino-acid sequence, 129 residues long: 3-oxo-4,17-pregnadiene-20-carboxyl-CoA hydratase beta subunit (129 aa).

This sequence belongs to the thioester dehydratase family. Heterodimer composed of ChsH1 and ChsH2. Two heterodimers combine to form a heterotetramer. The complex interacts with Ltp2 via the DUF35 C-terminal region of ChsH2. The ChsH1-ChsH2-Ltp2 protein complex is composed of two protomers that form a heterohexameric structure through the Ltp2 dimerization interface.

The enzyme catalyses 3-oxochola-4,17-dien-22-oyl-CoA + H2O = 17-hydroxy-3-oxochol-4-en-22-oyl-CoA. It carries out the reaction (2E)-octenoyl-CoA + H2O = 3-hydroxyoctanoyl-CoA. The catalysed reaction is (2E)-decenoyl-CoA + H2O = 3-hydroxydecanoyl-CoA. Its pathway is steroid metabolism; cholesterol degradation. In the absence of the Ltp2 aldolase, ChsH1/ChsH2 can hydrate only about 30% of the 3-OPDC-CoA substrate. Complete turnover requires the presence of Ltp2. Its function is as follows. Involved in cholesterol side chain degradation. Catalyzes the hydration of 3-oxo-4,17-pregnadiene-20-carboxyl-CoA (3-OPDC-CoA) to form 17-hydroxy-3-oxo-4-pregnene-20-carboxyl-CoA (17-HOPC-CoA), in the modified beta-oxidation pathway for cholesterol side chain degradation. Can also use octenoyl-CoA and decenoyl-CoA, with lower efficiency. This chain is 3-oxo-4,17-pregnadiene-20-carboxyl-CoA hydratase beta subunit, found in Mycobacterium tuberculosis (strain ATCC 25618 / H37Rv).